A 582-amino-acid chain; its full sequence is Arginine--tRNA ligase (582 aa).

Positions 127-137 match the 'HIGH' region motif; the sequence is PNLAKEMHVGH.

The protein belongs to the class-I aminoacyl-tRNA synthetase family. Monomer.

The protein resides in the cytoplasm. It carries out the reaction tRNA(Arg) + L-arginine + ATP = L-arginyl-tRNA(Arg) + AMP + diphosphate. This is Arginine--tRNA ligase from Psychromonas ingrahamii (strain DSM 17664 / CCUG 51855 / 37).